A 135-amino-acid polypeptide reads, in one-letter code: Large ribosomal subunit protein uL16c (135 aa).

This sequence belongs to the universal ribosomal protein uL16 family. In terms of assembly, part of the 50S ribosomal subunit.

Its subcellular location is the plastid. It is found in the chloroplast. This is Large ribosomal subunit protein uL16c from Coffea arabica (Arabian coffee).